A 105-amino-acid chain; its full sequence is Integration host factor (105 aa).

The H2TH motif, binds DNA signature appears at 64 to 71; that stretch reads LPKVGKVK. Residues 82–94 form a lid, binds DNA region; sequence APTRRLRGLGDRQ.

This sequence belongs to the actinobacterial IHF (aIHF) family. Homodimer in solution. Binds DNA as a monomer.

The protein resides in the cytoplasm. Functionally, a nucleoid-associated protein (NAP) required for septum formation and normal cell division as well as for DNA segregation. Binds about 135 sites across the chromosome, most of which are genes involved in virulence; most DNA-binding sites are immediately upstream of transcription start sites. When mIHF is depleted most of the genes are down-regulated. Binds supercoiled and linear dsDNA in a concentration-dependent manner, probably non-sequence specifically. Binding compacts DNA, protecting it from degradation. Initial binding to supercoiled DNA opens it fully, followed by bending and compaction. Bends and thus compacts linear DNA. Binds DNA via 2 sites, forms left-handed loops on linear DNA; at low concentrations unwinds larger cosmids (42.6 kb) then collapses and condenses DNA as protein levels rise. Forms mostly left-handed loops on condensing cosmid DNA. The polypeptide is Integration host factor (Mycobacterium tuberculosis (strain ATCC 25618 / H37Rv)).